Consider the following 265-residue polypeptide: Chalcone synthase (265 aa).

Residue Cys40 is part of the active site.

The protein belongs to the thiolase-like superfamily. Chalcone/stilbene synthases family.

The enzyme catalyses (E)-4-coumaroyl-CoA + 3 malonyl-CoA + 3 H(+) = 2',4,4',6'-tetrahydroxychalcone + 3 CO2 + 4 CoA. The protein operates within secondary metabolite biosynthesis; flavonoid biosynthesis. The primary product of this enzyme is 4,2',4',6'-tetrahydroxychalcone (also termed naringenin-chalcone or chalcone) which can under specific conditions spontaneously isomerize into naringenin. The chain is Chalcone synthase (CHSII) from Medicago sativa (Alfalfa).